The primary structure comprises 478 residues: UDP-N-acetylmuramate--L-alanine ligase (478 aa).

Residue 120 to 126 (GSHGKTT) coordinates ATP.

The protein belongs to the MurCDEF family.

It localises to the cytoplasm. It carries out the reaction UDP-N-acetyl-alpha-D-muramate + L-alanine + ATP = UDP-N-acetyl-alpha-D-muramoyl-L-alanine + ADP + phosphate + H(+). Its pathway is cell wall biogenesis; peptidoglycan biosynthesis. Functionally, cell wall formation. This is UDP-N-acetylmuramate--L-alanine ligase from Rickettsia bellii (strain OSU 85-389).